The chain runs to 235 residues: Vacuolar protein sorting-associated protein 60.1 (235 aa).

The interval 1 to 29 (MRRVFGAKKNTEPPPSIQDASDRINKRGD) is disordered. Residues 20–29 (ASDRINKRGD) show a composition bias toward basic and acidic residues. Positions 99–148 (LKDAQQTMTALKSANKELKGMMKTVKIQDIDNLQDEMMDLMDVSSEIQES) form a coiled coil. The tract at residues 175-235 (MGNETEADGM…PAVPRASLRG (61 aa)) is disordered.

The protein belongs to the SNF7 family. Interacts with SKD1/VPS4 and LIP5. Interacts with VPS2.2.

It is found in the endosome. Its subcellular location is the multivesicular body membrane. Functionally, probable peripherally associated component of the endosomal sorting required for transport complex III (ESCRT-III) which is involved in multivesicular bodies (MVBs) formation and sorting of endosomal cargo proteins into MVBs. The polypeptide is Vacuolar protein sorting-associated protein 60.1 (Arabidopsis thaliana (Mouse-ear cress)).